We begin with the raw amino-acid sequence, 172 residues long: Small integral membrane protein 23 (172 aa).

The Cytoplasmic segment spans residues Met-1–Thr-36. The helical; Signal-anchor for type II membrane protein transmembrane segment at Leu-37 to Gly-53 threads the bilayer. Over Ser-54 to Leu-172 the chain is Extracellular. The stretch at Leu-96–Leu-128 forms a coiled coil.

It is found in the cell membrane. In Homo sapiens (Human), this protein is Small integral membrane protein 23 (SMIM23).